We begin with the raw amino-acid sequence, 281 residues long: Bifunctional protein FolD (281 aa).

Residues 165 to 167 (GRS) and Ser190 contribute to the NADP(+) site.

Belongs to the tetrahydrofolate dehydrogenase/cyclohydrolase family. As to quaternary structure, homodimer.

The catalysed reaction is (6R)-5,10-methylene-5,6,7,8-tetrahydrofolate + NADP(+) = (6R)-5,10-methenyltetrahydrofolate + NADPH. The enzyme catalyses (6R)-5,10-methenyltetrahydrofolate + H2O = (6R)-10-formyltetrahydrofolate + H(+). It functions in the pathway one-carbon metabolism; tetrahydrofolate interconversion. Its function is as follows. Catalyzes the oxidation of 5,10-methylenetetrahydrofolate to 5,10-methenyltetrahydrofolate and then the hydrolysis of 5,10-methenyltetrahydrofolate to 10-formyltetrahydrofolate. This Polaromonas naphthalenivorans (strain CJ2) protein is Bifunctional protein FolD.